Here is a 1235-residue protein sequence, read N- to C-terminus: Bromodomain-containing protein 8 (1235 aa).

Lysine 85 carries the post-translational modification N6-acetyllysine. Positions 97-171 (VRKLTAERVE…ATDAAYQARQ (75 aa)) form a coiled coil. Position 124 is a phosphothreonine (arginine 124). Phosphoserine occurs at positions 128 and 144. The tract at residues 186 to 205 (RSPIDSASPGGDYPLGDLTP) is disordered. Alanine 264 carries the post-translational modification Phosphothreonine. 4 positions are modified to phosphoserine: serine 268, serine 284, serine 383, and serine 387. Residue lysine 469 forms a Glycyl lysine isopeptide (Lys-Gly) (interchain with G-Cter in SUMO2) linkage. Position 481 is an N6-acetyllysine; alternate (lysine 481). Residue lysine 481 forms a Glycyl lysine isopeptide (Lys-Gly) (interchain with G-Cter in SUMO1); alternate linkage. Residue lysine 481 forms a Glycyl lysine isopeptide (Lys-Gly) (interchain with G-Cter in SUMO2); alternate linkage. Residues lysine 509 and lysine 575 each participate in a glycyl lysine isopeptide (Lys-Gly) (interchain with G-Cter in SUMO2) cross-link. A disordered region spans residues 551-597 (TAAGEIVEADVAIGKGDETPLTNVKTEASPESMLSPSHGSNPIEDPL). At serine 579 the chain carries Phosphoserine. Lysine 612 participates in a covalent cross-link: Glycyl lysine isopeptide (Lys-Gly) (interchain with G-Cter in SUMO2). Serine 621, serine 637, and serine 641 each carry phosphoserine. Positions 621–672 (SQIKDAPGEDEEEDGVSEAASLEEPKEEDQGEGYLSEMDNEPPVSESDDGFS) are disordered. Positions 706–811 (IQAQKIWKKA…RDVLEQIQQF (106 aa)) constitute a Bromo 1 domain. 3 disordered regions span residues 827-848 (AKSL…DSVP), 903-940 (ETED…AARK), and 966-999 (ESSE…ETEE). Over residues 831–846 (RGRDSTRKQDASEKDS) the composition is skewed to basic and acidic residues. Acidic residues predominate over residues 905–915 (EDPEAEELEES). Residue leucine 924 is modified to Phosphoserine. The segment covering 979–999 (QEGREIKASEGERELCRETEE) has biased composition (basic and acidic residues). In terms of domain architecture, Bromo 2 spans 1099–1207 (DDPVQDHLLF…QEVLEQIQVL (109 aa)).

In terms of assembly, component of the NuA4 histone acetyltransferase complex which contains the catalytic subunit KAT5/TIP60 and the subunits EP400, TRRAP/PAF400, BRD8/SMAP, EPC1, DMAP1/DNMAP1, RUVBL1/TIP49, RUVBL2, ING3, actin, ACTL6A/BAF53A, MORF4L1/MRG15, MORF4L2/MRGX, MRGBP, YEATS4/GAS41, VPS72/YL1 and MEAF6. The NuA4 complex interacts with MYC and the adenovirus E1A protein. Component of a NuA4-related complex which contains EP400, TRRAP/PAF400, SRCAP, BRD8/SMAP, EPC1, DMAP1/DNMAP1, RUVBL1/TIP49, RUVBL2, actin, ACTL6A/BAF53A, VPS72 and YEATS4/GAS41. BRD8 isoform 2 interacts with RXRA/NR2B1 and THRB/ERBA2. Component of a SWR1-like complex. In terms of tissue distribution, expressed in adipose tissue, brain, heart, kidney, liver, lung, pancreas, placenta and skeletal muscle.

It is found in the nucleus. In terms of biological role, may act as a coactivator during transcriptional activation by hormone-activated nuclear receptors (NR). Isoform 2 stimulates transcriptional activation by AR/DHTR, ESR1/NR3A1, RXRA/NR2B1 and THRB/ERBA2. At least isoform 1 and isoform 2 are components of the NuA4 histone acetyltransferase (HAT) complex which is involved in transcriptional activation of select genes principally by acetylation of nucleosomal histones H4 and H2A. This modification may both alter nucleosome - DNA interactions and promote interaction of the modified histones with other proteins which positively regulate transcription. This complex may be required for the activation of transcriptional programs associated with oncogene and proto-oncogene mediated growth induction, tumor suppressor mediated growth arrest and replicative senescence, apoptosis, and DNA repair. NuA4 may also play a direct role in DNA repair when recruited to sites of DNA damage. Component of a SWR1-like complex that specifically mediates the removal of histone H2A.Z/H2AZ1 from the nucleosome. The chain is Bromodomain-containing protein 8 (BRD8) from Homo sapiens (Human).